A 404-amino-acid chain; its full sequence is S-adenosylmethionine synthase (404 aa).

Histidine 18 serves as a coordination point for ATP. Aspartate 20 is a Mg(2+) binding site. Position 46 (glutamate 46) interacts with K(+). L-methionine is bound by residues glutamate 59 and glutamine 102. The tract at residues 102-112 is flexible loop; the sequence is QSPEIAQGVDH. ATP-binding positions include 178 to 180, 249 to 250, aspartate 258, 264 to 265, alanine 281, and lysine 285; these read DGK, KF, and RK. Position 258 (aspartate 258) interacts with L-methionine. Residue lysine 289 participates in L-methionine binding.

This sequence belongs to the AdoMet synthase family. Homotetramer; dimer of dimers. The cofactor is Mg(2+). Requires K(+) as cofactor.

It is found in the cytoplasm. It carries out the reaction L-methionine + ATP + H2O = S-adenosyl-L-methionine + phosphate + diphosphate. The protein operates within amino-acid biosynthesis; S-adenosyl-L-methionine biosynthesis; S-adenosyl-L-methionine from L-methionine: step 1/1. Catalyzes the formation of S-adenosylmethionine (AdoMet) from methionine and ATP. The overall synthetic reaction is composed of two sequential steps, AdoMet formation and the subsequent tripolyphosphate hydrolysis which occurs prior to release of AdoMet from the enzyme. In Rhodococcus jostii (strain RHA1), this protein is S-adenosylmethionine synthase.